A 384-amino-acid polypeptide reads, in one-letter code: Glucose-1-phosphate adenylyltransferase (384 aa).

Residues Y103, G168, 183-184 (EK), and S194 contribute to the alpha-D-glucose 1-phosphate site.

It belongs to the bacterial/plant glucose-1-phosphate adenylyltransferase family. As to quaternary structure, homotetramer.

It catalyses the reaction alpha-D-glucose 1-phosphate + ATP + H(+) = ADP-alpha-D-glucose + diphosphate. It functions in the pathway glycan biosynthesis; glycogen biosynthesis. Involved in the biosynthesis of ADP-glucose, a building block required for the elongation reactions to produce glycogen. Catalyzes the reaction between ATP and alpha-D-glucose 1-phosphate (G1P) to produce pyrophosphate and ADP-Glc. The chain is Glucose-1-phosphate adenylyltransferase from Fusobacterium nucleatum subsp. nucleatum (strain ATCC 25586 / DSM 15643 / BCRC 10681 / CIP 101130 / JCM 8532 / KCTC 2640 / LMG 13131 / VPI 4355).